A 333-amino-acid polypeptide reads, in one-letter code: Foldase protein PrsA (333 aa).

An N-terminal signal peptide occupies residues 1–21 (MKKRTIATGLVTLLSIVTLAA). Cysteine 22 is lipidated: N-palmitoyl cysteine. The S-diacylglycerol cysteine moiety is linked to residue cysteine 22. One can recognise a PpiC domain in the interval 144-237 (KPEVTAQVIQ…PVYYIVKITK (94 aa)). Residues 296-333 (AASGSGSSGSTTTTTAASSAATTAADDQTTAAETTAAE) form a disordered region.

This sequence belongs to the PrsA family.

Its subcellular location is the cell membrane. The catalysed reaction is [protein]-peptidylproline (omega=180) = [protein]-peptidylproline (omega=0). Its function is as follows. Plays a major role in protein secretion by helping the post-translocational extracellular folding of several secreted proteins. This is Foldase protein PrsA from Streptococcus mutans serotype c (strain ATCC 700610 / UA159).